Reading from the N-terminus, the 294-residue chain is Fructose-bisphosphate aldolase class 1 (294 aa).

Residue glutamate 176 is the Proton acceptor of the active site. Lysine 213 functions as the Schiff-base intermediate with dihydroxyacetone-P in the catalytic mechanism.

The protein belongs to the class I fructose-bisphosphate aldolase family.

It carries out the reaction beta-D-fructose 1,6-bisphosphate = D-glyceraldehyde 3-phosphate + dihydroxyacetone phosphate. It functions in the pathway carbohydrate degradation; glycolysis; D-glyceraldehyde 3-phosphate and glycerone phosphate from D-glucose: step 4/4. This Oceanobacillus iheyensis (strain DSM 14371 / CIP 107618 / JCM 11309 / KCTC 3954 / HTE831) protein is Fructose-bisphosphate aldolase class 1.